Here is a 160-residue protein sequence, read N- to C-terminus: MANDRVPMTPAGEQALRAELDKLKKIERPAIIEAIAEARDHGDLKENAEYHAARERQGIIEGRIKDIESKLSNAQVIDVTKIQANGMVIFGATVTIMNVDTEEETTYKIVGEDEADIDNQKISVVAPLARALIKKEEGDEITLDTPKGKVTYEIVAVEYK.

Belongs to the GreA/GreB family.

Its function is as follows. Necessary for efficient RNA polymerase transcription elongation past template-encoded arresting sites. The arresting sites in DNA have the property of trapping a certain fraction of elongating RNA polymerases that pass through, resulting in locked ternary complexes. Cleavage of the nascent transcript by cleavage factors such as GreA or GreB allows the resumption of elongation from the new 3'terminus. GreA releases sequences of 2 to 3 nucleotides. This chain is Transcription elongation factor GreA, found in Francisella tularensis subsp. tularensis (strain FSC 198).